Here is a 535-residue protein sequence, read N- to C-terminus: Sodium/hydrogen exchanger 9B2 (535 aa).

Basic and acidic residues predominate over residues 1–14; sequence MRNQDKRAAHKDSE. Residues 1-70 form a disordered region; sequence MRNQDKRAAH…TPAEPNHLQR (70 aa). The Cytoplasmic segment spans residues 1-85; the sequence is MRNQDKRAAH…ACPPRGLLAR (85 aa). 2 stretches are compositionally biased toward polar residues: residues 16–34 and 46–58; these read STEVNHTASSYQGRQQETG and TEGSNLLNNNEKM. A helical transmembrane segment spans residues 86–103; the sequence is VITNVTMVILLWAVVWSV. The Extracellular segment spans residues 104 to 112; the sequence is TGSECLPGG. Residues 113–132 traverse the membrane as a helical segment; that stretch reads NLFGIIMLFYCAIIGGKLFG. The Cytoplasmic portion of the chain corresponds to 133-143; it reads LIKLPTLPPLP. The helical transmembrane segment at 144–160 threads the bilayer; the sequence is PLLGMLLAGFLIRNVPV. The Extracellular portion of the chain corresponds to 161–170; the sequence is ISDNIQIKHK. The helical transmembrane segment at 171-188 threads the bilayer; the sequence is WSSALRSIALSVILVRAG. Residues 189 to 199 lie on the Cytoplasmic side of the membrane; the sequence is LGLDSNALKKL. The chain crosses the membrane as a helical span at residues 200 to 226; sequence KGVCVRLSLGPCLIEACTSAVLAYFLM. The Extracellular segment spans residues 227-232; sequence GLPWQW. The chain crosses the membrane as a helical span at residues 233-241; sequence GFMLGFVLG. Residues 242 to 269 lie on the Cytoplasmic side of the membrane; sequence AVSPAVVVPSMLLLQEGGYGVEKGIPTL. Residues V243, G274, D277, and D278 each coordinate Na(+). The helical transmembrane segment at 270–289 threads the bilayer; sequence LMAAGSFDDILAITGFNTCL. At 290 to 299 the chain is on the extracellular side; the sequence is GMAFSTGSTV. Residues 300 to 323 form a helical membrane-spanning segment; it reads FNVLKGVLEVIIGVVTGLVLGFFI. The Cytoplasmic portion of the chain corresponds to 324–338; sequence QYFPSSDQDNLVWKR. A helical membrane pass occupies residues 339-356; it reads AFLVLGLSVLAVFSSTYF. At 357-360 the chain is on the extracellular side; that stretch reads GFPG. A helical membrane pass occupies residues 361-372; that stretch reads SGGLCTLVTAFL. Residues 373-389 are Cytoplasmic-facing; the sequence is AGRGWASTKTDVEKVIA. The helical transmembrane segment at 390–410 threads the bilayer; the sequence is VAWDIFQPLLFGLIGAEVLIT. Over 411–416 the chain is Extracellular; the sequence is ALRPET. A helical membrane pass occupies residues 417–439; the sequence is IGLCVATLGIAVLIRILVTYLMV. Over 440–460 the chain is Cytoplasmic; that stretch reads CFAGFNIKEKIFISFAWLPKA. Residues 461 to 472 traverse the membrane as a helical segment; it reads TVQAAIGSVALD. Topologically, residues 473-485 are extracellular; sequence TARSHGEKQLEGY. Residues 486 to 508 form a helical membrane-spanning segment; the sequence is GMDVLTVAFLSIIITAPVGSLLI. The Cytoplasmic portion of the chain corresponds to 509–535; sequence GLLGPRLLQKAEQNKDEEDQGETSIQV.

It belongs to the monovalent cation:proton antiporter 1 (CPA1) transporter (TC 2.A.36) family. As to quaternary structure, homodimer; dimerization is essential for SLC9B2 activity. Lipids seem to play a role in the stabilization of the dimerization subdomain.

The protein resides in the cell membrane. It is found in the mitochondrion membrane. It localises to the endosome membrane. The protein localises to the recycling endosome membrane. Its subcellular location is the lysosome membrane. The protein resides in the cytoplasmic vesicle. It is found in the secretory vesicle. It localises to the synaptic vesicle membrane. The protein localises to the cell projection. Its subcellular location is the cilium. The protein resides in the flagellum membrane. It is found in the basolateral cell membrane. It localises to the apical cell membrane. It catalyses the reaction Li(+)(out) + H(+)(in) = Li(+)(in) + H(+)(out). The enzyme catalyses Li(+)(in) + Na(+)(out) = Li(+)(out) + Na(+)(in). The catalysed reaction is Na(+)(in) + H(+)(out) = Na(+)(out) + H(+)(in). Allosterically inhibited by the N-terminal domain. Inhibited by phloretin. In terms of biological role, electroneutral Na(+) Li(+)/H(+) antiporter that extrudes Na(+) or Li(+) in exchange for external protons across the membrane. Uses the proton gradient/membrane potential to extrude sodium. Contributes to the regulation of intracellular pH and sodium homeostasis. Also able to mediate Na(+)/Li(+) antiporter activity in kidney. May play a physiological role in renal tubular function and blood pressure homeostasis. Plays an important role for insulin secretion and clathrin-mediated endocytosis in beta-cells. Involved in sperm motility and fertility. It is controversial whether SLC9B2 plays a role in osteoclast differentiation or not. This chain is Sodium/hydrogen exchanger 9B2 (SLC9B2), found in Bison bison bison (North American plains bison).